Here is a 460-residue protein sequence, read N- to C-terminus: Tol-Pal system protein TolB (460 aa).

A signal peptide spans 1-22; it reads MTIFQKSFILLIIWNFSLFAFS.

This sequence belongs to the TolB family. In terms of assembly, the Tol-Pal system is composed of five core proteins: the inner membrane proteins TolA, TolQ and TolR, the periplasmic protein TolB and the outer membrane protein Pal. They form a network linking the inner and outer membranes and the peptidoglycan layer.

Its subcellular location is the periplasm. Functionally, part of the Tol-Pal system, which plays a role in outer membrane invagination during cell division and is important for maintaining outer membrane integrity. TolB occupies a key intermediary position in the Tol-Pal system because it communicates directly with both membrane-embedded components, Pal in the outer membrane and TolA in the inner membrane. The sequence is that of Tol-Pal system protein TolB from Blochmanniella floridana.